The sequence spans 267 residues: 4-hydroxy-tetrahydrodipicolinate reductase (267 aa).

NAD(+) contacts are provided by residues Gly8–Met13 and Glu34. NADP(+) is bound at residue Arg35. NAD(+) contacts are provided by residues Gly98–Thr100 and Ala122–Met125. His155 acts as the Proton donor/acceptor in catalysis. His156 contacts (S)-2,3,4,5-tetrahydrodipicolinate. Catalysis depends on Lys159, which acts as the Proton donor. (S)-2,3,4,5-tetrahydrodipicolinate is bound at residue Gly165–Thr166.

Belongs to the DapB family.

It is found in the cytoplasm. It carries out the reaction (S)-2,3,4,5-tetrahydrodipicolinate + NAD(+) + H2O = (2S,4S)-4-hydroxy-2,3,4,5-tetrahydrodipicolinate + NADH + H(+). It catalyses the reaction (S)-2,3,4,5-tetrahydrodipicolinate + NADP(+) + H2O = (2S,4S)-4-hydroxy-2,3,4,5-tetrahydrodipicolinate + NADPH + H(+). It participates in amino-acid biosynthesis; L-lysine biosynthesis via DAP pathway; (S)-tetrahydrodipicolinate from L-aspartate: step 4/4. Catalyzes the conversion of 4-hydroxy-tetrahydrodipicolinate (HTPA) to tetrahydrodipicolinate. This Geotalea uraniireducens (strain Rf4) (Geobacter uraniireducens) protein is 4-hydroxy-tetrahydrodipicolinate reductase.